The following is a 309-amino-acid chain: tRNA-cytidine(32) 2-sulfurtransferase (309 aa).

A PP-loop motif motif is present at residues 45 to 50; the sequence is SGGKDS. [4Fe-4S] cluster-binding residues include C120, C123, and C211.

This sequence belongs to the TtcA family. In terms of assembly, homodimer. Mg(2+) serves as cofactor. Requires [4Fe-4S] cluster as cofactor.

The protein localises to the cytoplasm. The enzyme catalyses cytidine(32) in tRNA + S-sulfanyl-L-cysteinyl-[cysteine desulfurase] + AH2 + ATP = 2-thiocytidine(32) in tRNA + L-cysteinyl-[cysteine desulfurase] + A + AMP + diphosphate + H(+). Its pathway is tRNA modification. Functionally, catalyzes the ATP-dependent 2-thiolation of cytidine in position 32 of tRNA, to form 2-thiocytidine (s(2)C32). The sulfur atoms are provided by the cysteine/cysteine desulfurase (IscS) system. This is tRNA-cytidine(32) 2-sulfurtransferase from Psychromonas ingrahamii (strain DSM 17664 / CCUG 51855 / 37).